The chain runs to 114 residues: Phycoerythrin alpha-1 subunit (114 aa).

(2R,3E)-phycoerythrobilin-binding residues include D52, S53, E63, R64, C67, T72, K74, A75, and K84.

The protein belongs to the phycoerythrin family. As to quaternary structure, heterotetramer of 2 different alpha chains and 2 identical beta chains which form 2 alpha-beta heterodimers within the heterotetramer. The two alpha-beta heterodimers are rotated to an open configuration in contrast to the closed configuration found in other cryptophyte species due to the insertion of a single amino acid, Asp-65, in a conserved region of the alpha chain. In the open form, the central chromophores are not in physical contact but are separated by a water-filled channel. Post-translationally, contains three phycoerythrobilin chromophores with binding mediated by both the alpha and beta subunits.

The protein resides in the plastid. It is found in the chloroplast thylakoid membrane. In terms of biological role, light-harvesting photosynthetic tetrapyrrole chromophore-protein from the phycobiliprotein complex. The chain is Phycoerythrin alpha-1 subunit from Hemiselmis andersenii (Cryptophyte alga).